Reading from the N-terminus, the 61-residue chain is uncharacterized protein (61 aa).

Positions 1-28 (MHRRARRMPMRPRRSKRVRNRYTMGTFA) are cleaved as a signal peptide.

This is an uncharacterized protein from Mycobacterium tuberculosis (strain ATCC 25618 / H37Rv).